The chain runs to 334 residues: Biotin synthase (334 aa).

A Radical SAM core domain is found at 55-285; it reads GEGGGVHACS…AHPSKIIKFA (231 aa). [4Fe-4S] cluster contacts are provided by Cys73, Cys77, and Cys80. Positions 152, 213, and 283 each coordinate [2Fe-2S] cluster.

Belongs to the radical SAM superfamily. Biotin synthase family. As to quaternary structure, homodimer. The cofactor is [4Fe-4S] cluster. [2Fe-2S] cluster serves as cofactor.

The enzyme catalyses (4R,5S)-dethiobiotin + (sulfur carrier)-SH + 2 reduced [2Fe-2S]-[ferredoxin] + 2 S-adenosyl-L-methionine = (sulfur carrier)-H + biotin + 2 5'-deoxyadenosine + 2 L-methionine + 2 oxidized [2Fe-2S]-[ferredoxin]. It functions in the pathway cofactor biosynthesis; biotin biosynthesis; biotin from 7,8-diaminononanoate: step 2/2. Catalyzes the conversion of dethiobiotin (DTB) to biotin by the insertion of a sulfur atom into dethiobiotin via a radical-based mechanism. This is Biotin synthase from Chlorobaculum parvum (strain DSM 263 / NCIMB 8327) (Chlorobium vibrioforme subsp. thiosulfatophilum).